Consider the following 347-residue polypeptide: MQKTIGDIMNNRIERFLKYMESEGIKKAVILKKENINYFLGKYFMSFSVLVFEEQPYLYVGKLDKDYAEEHFNFLEIREFKSWEEIFKGCDGVEKELSIGYLKYIDKEYKIISDKIKEMRMIKDKEEIKLIKKAAEISDKAINWVLNNLDEVKNLTEYELVAEIEYIMKKHGSIKPAFDSIVVSGKKTSFPHALPTKDKIADILLVDIGAVYEGYCSDITRTFLLKDDEEMKKIYNLVYEAKKVAEEHLKEGISAKQIDNIVREFFNDYKELFIHSLGHGVGLEVHEEPRLSNKLKDDEDIILKEGMVVTIEPGLYLKDKFGVRIEDLYLVKKNGFEKLSKAEISEY.

Residues Asp-207, Asp-218, His-279, Glu-312, and Glu-326 each coordinate Mn(2+).

This sequence belongs to the peptidase M24B family. Mn(2+) is required as a cofactor.

This is an uncharacterized protein from Methanocaldococcus jannaschii (strain ATCC 43067 / DSM 2661 / JAL-1 / JCM 10045 / NBRC 100440) (Methanococcus jannaschii).